Consider the following 322-residue polypeptide: Phosphatidylglycerol--prolipoprotein diacylglyceryl transferase (322 aa).

4 helical membrane-spanning segments follow: residues 21–41, 50–70, 98–118, and 123–143; these read PLPI…AIWL, GGNP…GIIG, NGGL…WAYF, and IPLA…QAIG. Residue Arg-144 participates in a 1,2-diacyl-sn-glycero-3-phospho-(1'-sn-glycerol) binding. The next 2 helical transmembrane spans lie at 191–211 and 254–274; these read VHPT…LLIW and INTL…LRLG. The disordered stretch occupies residues 283–322; sequence VDPAYHAAQAERDDTETAGLDATTGTVPGDSPETTGKKRK.

Belongs to the Lgt family.

The protein resides in the cell membrane. It carries out the reaction L-cysteinyl-[prolipoprotein] + a 1,2-diacyl-sn-glycero-3-phospho-(1'-sn-glycerol) = an S-1,2-diacyl-sn-glyceryl-L-cysteinyl-[prolipoprotein] + sn-glycerol 1-phosphate + H(+). It participates in protein modification; lipoprotein biosynthesis (diacylglyceryl transfer). In terms of biological role, catalyzes the transfer of the diacylglyceryl group from phosphatidylglycerol to the sulfhydryl group of the N-terminal cysteine of a prolipoprotein, the first step in the formation of mature lipoproteins. The polypeptide is Phosphatidylglycerol--prolipoprotein diacylglyceryl transferase (Corynebacterium efficiens (strain DSM 44549 / YS-314 / AJ 12310 / JCM 11189 / NBRC 100395)).